A 519-amino-acid chain; its full sequence is GMP synthase [glutamine-hydrolyzing] (519 aa).

The Glutamine amidotransferase type-1 domain occupies 4-201 (AILILDFGSQ…VHDICDAGYD (198 aa)). The Nucleophile role is filled by C81. Residues H175 and E177 contribute to the active site. The region spanning 202 to 394 (WNMPDYVEEA…LGLPRDLVFR (193 aa)) is the GMPS ATP-PPase domain. An ATP-binding site is contributed by 229-235 (SGGVDSS).

Homodimer.

The enzyme catalyses XMP + L-glutamine + ATP + H2O = GMP + L-glutamate + AMP + diphosphate + 2 H(+). It participates in purine metabolism; GMP biosynthesis; GMP from XMP (L-Gln route): step 1/1. Its function is as follows. Catalyzes the synthesis of GMP from XMP. This chain is GMP synthase [glutamine-hydrolyzing], found in Nitrosomonas eutropha (strain DSM 101675 / C91 / Nm57).